The sequence spans 195 residues: MRDPFFYRWHSYIDDIFQEHKERLRPYTEAQLNFNGITVTGVQVAPERGPTNTFQTSWQQSDVDLSRGMDFVAPRGNVTARFTHLNHTPFTYSIQVNNSSGAQRMGMVRIFLAPKTDERGNEMLFRDQRLMMIEMDKFVVSMRPGQNTIRRRSTESTVTIPFERTFRSLEESRPDQTTDAQQQFNFCGCGWPHHM.

His10 contributes to the Cu cation binding site. Residues Asn77, Asn97, and Asn98 are each glycosylated (N-linked (GlcNAc...) asparagine).

It belongs to the tyrosinase family. Heterodimer. The cofactor is Cu(2+).

The protein resides in the secreted. It catalyses the reaction 2 L-dopa + O2 = 2 L-dopaquinone + 2 H2O. The catalysed reaction is L-tyrosine + O2 = L-dopaquinone + H2O. This is a copper-containing oxidase that functions in the formation of pigments such as melanins and other polyphenolic compounds. Catalyzes the rate-limiting conversions of tyrosine to DOPA, DOPA to DOPA-quinone and possibly 5,6 dihydroxyindole to indole-5'6 quinone. This chain is Phenoloxidase subunit 1, found in Simulium damnosum (Black fly).